The primary structure comprises 149 residues: Nucleoside diphosphate kinase (149 aa).

ATP-binding residues include Lys9, Phe57, Arg85, Thr91, Arg102, and Asn112. His115 serves as the catalytic Pros-phosphohistidine intermediate.

It belongs to the NDK family. Homotetramer. Mg(2+) is required as a cofactor.

It is found in the cytoplasm. The catalysed reaction is a 2'-deoxyribonucleoside 5'-diphosphate + ATP = a 2'-deoxyribonucleoside 5'-triphosphate + ADP. It carries out the reaction a ribonucleoside 5'-diphosphate + ATP = a ribonucleoside 5'-triphosphate + ADP. Major role in the synthesis of nucleoside triphosphates other than ATP. The ATP gamma phosphate is transferred to the NDP beta phosphate via a ping-pong mechanism, using a phosphorylated active-site intermediate. The protein is Nucleoside diphosphate kinase of Herpetosiphon aurantiacus (strain ATCC 23779 / DSM 785 / 114-95).